The primary structure comprises 920 residues: Isoleucine--tRNA ligase (920 aa).

The 'HIGH' region motif lies at 58 to 68 (PYANGHLHLGH). Glu-569 contacts L-isoleucyl-5'-AMP. Positions 610 to 614 (KMSKS) match the 'KMSKS' region motif. ATP is bound at residue Lys-613. 4 residues coordinate Zn(2+): Cys-895, Cys-898, Cys-910, and Cys-913.

It belongs to the class-I aminoacyl-tRNA synthetase family. IleS type 1 subfamily. As to quaternary structure, monomer. Requires Zn(2+) as cofactor.

It is found in the cytoplasm. It carries out the reaction tRNA(Ile) + L-isoleucine + ATP = L-isoleucyl-tRNA(Ile) + AMP + diphosphate. Its function is as follows. Catalyzes the attachment of isoleucine to tRNA(Ile). As IleRS can inadvertently accommodate and process structurally similar amino acids such as valine, to avoid such errors it has two additional distinct tRNA(Ile)-dependent editing activities. One activity is designated as 'pretransfer' editing and involves the hydrolysis of activated Val-AMP. The other activity is designated 'posttransfer' editing and involves deacylation of mischarged Val-tRNA(Ile). This chain is Isoleucine--tRNA ligase, found in Helicobacter pylori (strain HPAG1).